The following is a 279-amino-acid chain: Thymidylate synthase (279 aa).

A dUMP-binding site is contributed by 132–133; it reads RR. Cys-153 functions as the Nucleophile in the catalytic mechanism. Residues 178-181, Asn-189, and 219-221 contribute to the dUMP site; these read RSND and HIY. Asp-181 is a binding site for (6R)-5,10-methylene-5,6,7,8-tetrahydrofolate. (6R)-5,10-methylene-5,6,7,8-tetrahydrofolate is bound at residue Ala-278.

This sequence belongs to the thymidylate synthase family. Bacterial-type ThyA subfamily. In terms of assembly, homodimer.

Its subcellular location is the cytoplasm. The catalysed reaction is dUMP + (6R)-5,10-methylene-5,6,7,8-tetrahydrofolate = 7,8-dihydrofolate + dTMP. Its pathway is pyrimidine metabolism; dTTP biosynthesis. Its function is as follows. Catalyzes the reductive methylation of 2'-deoxyuridine-5'-monophosphate (dUMP) to 2'-deoxythymidine-5'-monophosphate (dTMP) while utilizing 5,10-methylenetetrahydrofolate (mTHF) as the methyl donor and reductant in the reaction, yielding dihydrofolate (DHF) as a by-product. This enzymatic reaction provides an intracellular de novo source of dTMP, an essential precursor for DNA biosynthesis. The chain is Thymidylate synthase from Lactococcus lactis subsp. cremoris (strain SK11).